We begin with the raw amino-acid sequence, 233 residues long: 5'-methylthioadenosine/S-adenosylhomocysteine nucleosidase (233 aa).

Catalysis depends on Glu-12, which acts as the Proton acceptor. Residues Gly-78, Ile-156, and 177–178 (ME) each bind substrate. Asp-201 (proton donor) is an active-site residue.

The protein belongs to the PNP/UDP phosphorylase family. MtnN subfamily.

It carries out the reaction S-adenosyl-L-homocysteine + H2O = S-(5-deoxy-D-ribos-5-yl)-L-homocysteine + adenine. The enzyme catalyses S-methyl-5'-thioadenosine + H2O = 5-(methylsulfanyl)-D-ribose + adenine. It catalyses the reaction 5'-deoxyadenosine + H2O = 5-deoxy-D-ribose + adenine. Its pathway is amino-acid biosynthesis; L-methionine biosynthesis via salvage pathway; S-methyl-5-thio-alpha-D-ribose 1-phosphate from S-methyl-5'-thioadenosine (hydrolase route): step 1/2. In terms of biological role, catalyzes the irreversible cleavage of the glycosidic bond in both 5'-methylthioadenosine (MTA) and S-adenosylhomocysteine (SAH/AdoHcy) to adenine and the corresponding thioribose, 5'-methylthioribose and S-ribosylhomocysteine, respectively. Also cleaves 5'-deoxyadenosine, a toxic by-product of radical S-adenosylmethionine (SAM) enzymes, into 5-deoxyribose and adenine. This is 5'-methylthioadenosine/S-adenosylhomocysteine nucleosidase from Listeria innocua serovar 6a (strain ATCC BAA-680 / CLIP 11262).